A 186-amino-acid polypeptide reads, in one-letter code: Ribosome-recycling factor (186 aa).

The protein belongs to the RRF family.

Its subcellular location is the cytoplasm. Functionally, responsible for the release of ribosomes from messenger RNA at the termination of protein biosynthesis. May increase the efficiency of translation by recycling ribosomes from one round of translation to another. The sequence is that of Ribosome-recycling factor from Bordetella petrii (strain ATCC BAA-461 / DSM 12804 / CCUG 43448).